Here is a 799-residue protein sequence, read N- to C-terminus: Cadherin-8 (799 aa).

The first 29 residues, 1–29 (MPERLAEMLLDLWTPLIILWITLPPCIYM), serve as a signal peptide directing secretion. The propeptide occupies 30–61 (APMNQSQVLMSGSPLELNSLGEEQRILNRSKR). Asparagine 33 and asparagine 57 each carry an N-linked (GlcNAc...) asparagine glycan. Cadherin domains follow at residues 62-167 (GWVW…APEF), 168-276 (LNGP…PPKF), 277-391 (AQSL…PPVF), 392-494 (SSPT…DNAP), and 495-616 (EFAS…YVLP). Residues 62 to 621 (GWVWNQMFVL…AYVLPIGLSM (560 aa)) are Extracellular-facing. Asparagine 188 carries an N-linked (GlcNAc...) asparagine glycan. N-linked (GlcNAc...) asparagine glycans are attached at residues asparagine 463, asparagine 473, and asparagine 544. Residues 622–642 (GALIAILACIILLLVIVVLFV) form a helical membrane-spanning segment. The Cytoplasmic segment spans residues 643–799 (TLRRHKNEPL…YSVGESDKET (157 aa)). Serine 795 carries the post-translational modification Phosphoserine.

Mainly expressed in brain. Found in certain nerve cell lines, such as retinoblasts, glioma cells and neuroblasts.

It is found in the cell membrane. Its function is as follows. Cadherins are calcium-dependent cell adhesion proteins. They preferentially interact with themselves in a homophilic manner in connecting cells; cadherins may thus contribute to the sorting of heterogeneous cell types. In Homo sapiens (Human), this protein is Cadherin-8 (CDH8).